Reading from the N-terminus, the 280-residue chain is Phosphatidylglycerol--prolipoprotein diacylglyceryl transferase (280 aa).

2 helical membrane passes run 59 to 79 (FLTW…ILFY) and 97 to 117 (GGMS…LFTW). Residue Arg-142 participates in a 1,2-diacyl-sn-glycero-3-phospho-(1'-sn-glycerol) binding. The next 2 membrane-spanning stretches (helical) occupy residues 207–227 (GFLA…CECF) and 233–253 (FIGF…PMAI).

The protein belongs to the Lgt family.

It is found in the cell inner membrane. The enzyme catalyses L-cysteinyl-[prolipoprotein] + a 1,2-diacyl-sn-glycero-3-phospho-(1'-sn-glycerol) = an S-1,2-diacyl-sn-glyceryl-L-cysteinyl-[prolipoprotein] + sn-glycerol 1-phosphate + H(+). Its pathway is protein modification; lipoprotein biosynthesis (diacylglyceryl transfer). In terms of biological role, catalyzes the transfer of the diacylglyceryl group from phosphatidylglycerol to the sulfhydryl group of the N-terminal cysteine of a prolipoprotein, the first step in the formation of mature lipoproteins. The protein is Phosphatidylglycerol--prolipoprotein diacylglyceryl transferase of Gluconacetobacter diazotrophicus (strain ATCC 49037 / DSM 5601 / CCUG 37298 / CIP 103539 / LMG 7603 / PAl5).